The sequence spans 241 residues: Carboxy-S-adenosyl-L-methionine synthase (241 aa).

S-adenosyl-L-methionine is bound by residues Y38, 63 to 65 (GCS), 88 to 89 (DN), 116 to 117 (DI), N131, and R198.

It belongs to the class I-like SAM-binding methyltransferase superfamily. Cx-SAM synthase family. In terms of assembly, homodimer.

It catalyses the reaction prephenate + S-adenosyl-L-methionine = carboxy-S-adenosyl-L-methionine + 3-phenylpyruvate + H2O. In terms of biological role, catalyzes the conversion of S-adenosyl-L-methionine (SAM) to carboxy-S-adenosyl-L-methionine (Cx-SAM). This Haemophilus influenzae (strain 86-028NP) protein is Carboxy-S-adenosyl-L-methionine synthase.